Here is a 268-residue protein sequence, read N- to C-terminus: 3-methyl-2-oxobutanoate hydroxymethyltransferase (268 aa).

Mg(2+) is bound by residues Asp41 and Asp80. Residues 41–42 (DS), Asp80, and Lys110 contribute to the 3-methyl-2-oxobutanoate site. A Mg(2+)-binding site is contributed by Glu112. Catalysis depends on Glu178, which acts as the Proton acceptor.

This sequence belongs to the PanB family. In terms of assembly, homodecamer; pentamer of dimers. Requires Mg(2+) as cofactor.

The protein resides in the cytoplasm. It catalyses the reaction 3-methyl-2-oxobutanoate + (6R)-5,10-methylene-5,6,7,8-tetrahydrofolate + H2O = 2-dehydropantoate + (6S)-5,6,7,8-tetrahydrofolate. It functions in the pathway cofactor biosynthesis; coenzyme A biosynthesis. Catalyzes the reversible reaction in which hydroxymethyl group from 5,10-methylenetetrahydrofolate is transferred onto alpha-ketoisovalerate to form ketopantoate. The polypeptide is 3-methyl-2-oxobutanoate hydroxymethyltransferase (Natronomonas pharaonis (strain ATCC 35678 / DSM 2160 / CIP 103997 / JCM 8858 / NBRC 14720 / NCIMB 2260 / Gabara) (Halobacterium pharaonis)).